The sequence spans 72 residues: Cytochrome c oxidase subunit 2 (72 aa).

Over 1–14 (MAHPSQLGFQDAAS) the chain is Mitochondrial intermembrane. A helical membrane pass occupies residues 15-45 (PVMEELLHFHDHALMIVFLISTLVLYIIVAM). The Mitochondrial matrix segment spans residues 46–72 (VSTKLTNKHILDSQEVEIVWTILPAVI).

It belongs to the cytochrome c oxidase subunit 2 family. Component of the cytochrome c oxidase (complex IV, CIV), a multisubunit enzyme composed of 14 subunits. The complex is composed of a catalytic core of 3 subunits MT-CO1, MT-CO2 and MT-CO3, encoded in the mitochondrial DNA, and 11 supernumerary subunits COX4I, COX5A, COX5B, COX6A, COX6B, COX6C, COX7A, COX7B, COX7C, COX8 and NDUFA4, which are encoded in the nuclear genome. The complex exists as a monomer or a dimer and forms supercomplexes (SCs) in the inner mitochondrial membrane with NADH-ubiquinone oxidoreductase (complex I, CI) and ubiquinol-cytochrome c oxidoreductase (cytochrome b-c1 complex, complex III, CIII), resulting in different assemblies (supercomplex SCI(1)III(2)IV(1) and megacomplex MCI(2)III(2)IV(2)). Found in a complex with TMEM177, COA6, COX18, COX20, SCO1 and SCO2. Interacts with TMEM177 in a COX20-dependent manner. Interacts with COX20. Interacts with COX16. Cu cation is required as a cofactor.

Its subcellular location is the mitochondrion inner membrane. The catalysed reaction is 4 Fe(II)-[cytochrome c] + O2 + 8 H(+)(in) = 4 Fe(III)-[cytochrome c] + 2 H2O + 4 H(+)(out). Functionally, component of the cytochrome c oxidase, the last enzyme in the mitochondrial electron transport chain which drives oxidative phosphorylation. The respiratory chain contains 3 multisubunit complexes succinate dehydrogenase (complex II, CII), ubiquinol-cytochrome c oxidoreductase (cytochrome b-c1 complex, complex III, CIII) and cytochrome c oxidase (complex IV, CIV), that cooperate to transfer electrons derived from NADH and succinate to molecular oxygen, creating an electrochemical gradient over the inner membrane that drives transmembrane transport and the ATP synthase. Cytochrome c oxidase is the component of the respiratory chain that catalyzes the reduction of oxygen to water. Electrons originating from reduced cytochrome c in the intermembrane space (IMS) are transferred via the dinuclear copper A center (CU(A)) of subunit 2 and heme A of subunit 1 to the active site in subunit 1, a binuclear center (BNC) formed by heme A3 and copper B (CU(B)). The BNC reduces molecular oxygen to 2 water molecules using 4 electrons from cytochrome c in the IMS and 4 protons from the mitochondrial matrix. The polypeptide is Cytochrome c oxidase subunit 2 (mt-co2) (Atractosteus spatula (Alligator gar)).